The primary structure comprises 152 residues: Stigma-specific STIG1-like protein 1 (152 aa).

The N-terminal stretch at 1-19 (MAFVKLLVSIAITTAITIA) is a signal peptide.

Belongs to the STIG1 family.

The protein is Stigma-specific STIG1-like protein 1 of Arabidopsis thaliana (Mouse-ear cress).